A 274-amino-acid polypeptide reads, in one-letter code: Urease accessory protein UreD (274 aa).

This sequence belongs to the UreD family. In terms of assembly, ureD, UreF and UreG form a complex that acts as a GTP-hydrolysis-dependent molecular chaperone, activating the urease apoprotein by helping to assemble the nickel containing metallocenter of UreC. The UreE protein probably delivers the nickel.

Its subcellular location is the cytoplasm. Required for maturation of urease via the functional incorporation of the urease nickel metallocenter. This chain is Urease accessory protein UreD, found in Klebsiella pneumoniae subsp. pneumoniae (strain ATCC 700721 / MGH 78578).